Here is a 355-residue protein sequence, read N- to C-terminus: Eukaryotic initiation factor 4A-13 (355 aa).

Positions 40–68 (DSFDAMGLQENLLRGIYAYGFEKPSAIQQ) match the Q motif motif. A Helicase ATP-binding domain is found at 71–241 (IVPFCKGLDV…RKFMNQPVRI (171 aa)). 84–91 (AQSGTGKT) is a binding site for ATP. The DEAD box signature appears at 189 to 192 (DEAD). In terms of domain architecture, Helicase C-terminal spans 252–355 (GIKQFYVNVD…QQVSLVINYD (104 aa)).

It belongs to the DEAD box helicase family. eIF4A subfamily. In terms of assembly, eIF4F is a multi-subunit complex, the composition of which varies with external and internal environmental conditions. It is composed of at least EIF4A, EIF4E and EIF4G.

It catalyses the reaction ATP + H2O = ADP + phosphate + H(+). ATP-dependent RNA helicase which is a subunit of the eIF4F complex involved in cap recognition and is required for mRNA binding to ribosome. In the current model of translation initiation, eIF4A unwinds RNA secondary structures in the 5'-UTR of mRNAs which is necessary to allow efficient binding of the small ribosomal subunit, and subsequent scanning for the initiator codon. The chain is Eukaryotic initiation factor 4A-13 from Nicotiana tabacum (Common tobacco).